A 492-amino-acid chain; its full sequence is FAD-linked oxidoreductase pgmH (492 aa).

Residues 54-224 enclose the FAD-binding PCMH-type domain; sequence SIRLATLVVY…TEFKYRVHKQ (171 aa).

This sequence belongs to the oxygen-dependent FAD-linked oxidoreductase family. It depends on FAD as a cofactor.

It functions in the pathway pigment biosynthesis. The protein operates within secondary metabolite biosynthesis. Functionally, FAD-linked oxidoreductase; part of the gene cluster that mediates the biosynthesis of pleosporalin A, ascomycone A, as well as a third cryptic naphthoquinone derived pigment, all responsible for the coloration of conidia. Essential for the production of pleosporalin A, but not the 2 other final products. The pathway begins with the biosynthesis of the cyclized heptaketide 3-acetonyl-1,6,8-trihydroxy-2-naphthaldehyde by the NR-PKS pgmA. The C-6 hydroxyl group is further methylated by the O-methyltransferase pgmB to yield fusarubinaldehyde which is in turn oxidized by the cytochrome P450 monooxygenase pgmC at C-9. The C-1 hydroxyl group is then methylated spontaneously. Although pgmE, pgmD and pgmH are essential for the production of pleosporalin A, it is not the case for the 2 other final products and it remains difficult to assign a specific function to each enzyme. PgmF and pgmG seem not to be involved in pigment biosynthesis although they were regulated by the cluster-specific transcription factor pgmR. The chain is FAD-linked oxidoreductase pgmH from Aspergillus terreus.